An 88-amino-acid chain; its full sequence is Small cysteine-rich outer membrane protein OmcA (88 aa).

A signal peptide spans 1–18 (MKKTALLAALCSVVSLSS). C19 is lipidated: N-palmitoyl cysteine. C19 is lipidated: S-diacylglycerol cysteine.

In terms of assembly, part of a disulfide cross-linked outer membrane complex (COMC) composed of the major outer membrane porin (MOMP), the small cysteine-rich protein (OmcA) and the large cysteine-rich periplasmic protein (OmcB).

The protein localises to the cell outer membrane. Its function is as follows. In elementary bodies (EBs, the infectious stage, which is able to survive outside the host cell) provides the structural integrity of the outer envelope through disulfide cross-links with the large cysteine-rich periplasmic protein and the major outer membrane porin. It has been described in publications as the Sarkosyl-insoluble COMC (Chlamydia outer membrane complex), and serves as the functional equivalent of peptidoglycan. The protein is Small cysteine-rich outer membrane protein OmcA (omcA) of Chlamydia muridarum (strain MoPn / Nigg).